An 873-amino-acid chain; its full sequence is Probable inorganic carbon transporter subunit DabA (873 aa).

Zn(2+)-binding residues include Cys-393, Asp-395, His-575, and Cys-590.

It belongs to the inorganic carbon transporter (TC 9.A.2) DabA family. In terms of assembly, forms a complex with DabB. It depends on Zn(2+) as a cofactor.

It is found in the cell membrane. In terms of biological role, part of an energy-coupled inorganic carbon pump. The sequence is that of Probable inorganic carbon transporter subunit DabA from Bacillus licheniformis (strain ATCC 14580 / DSM 13 / JCM 2505 / CCUG 7422 / NBRC 12200 / NCIMB 9375 / NCTC 10341 / NRRL NRS-1264 / Gibson 46).